The sequence spans 640 residues: PTS system mannitol-specific EIICBA component (640 aa).

The PTS EIIC type-2 domain maps to 12–343; it reads LGRFLSAMIM…LKISNRNHYV (332 aa). Transmembrane regions (helical) follow at residues 24–45, 50–70, 134–155, 165–185, 273–292, and 313–334; these read ISVFIAWGIISGLFIKSGWCPN, KVLSPISVYLFPILIANTGGY, SVGILGVLLLFISFLCIGPMIE, VNLMINNHLLPFIAILIEPAK, LILGSITGIFILIVLRGGLI, and VINLLAIIISFLVSFLVSCMLL. The PTS EIIB type-2 domain maps to 379–475; sequence RNIIFACDAG…YLVENNLDNN (97 aa). Catalysis depends on cysteine 385, which acts as the Phosphocysteine intermediate; for EIIB activity. A Phosphocysteine; by EIIA modification is found at cysteine 385. A PTS EIIA type-2 domain is found at 496–638; sequence FSLTKENIFL…DDVLYLFSRK (143 aa). Histidine 556 (tele-phosphohistidine intermediate; for EIIA activity) is an active-site residue. Histidine 556 is subject to Phosphohistidine; by HPr.

As to quaternary structure, homodimer. In terms of processing, an intramolecular phosphotransfer takes places between His-556 and Cys-385.

Its subcellular location is the cell inner membrane. The enzyme catalyses D-mannitol(out) + N(pros)-phospho-L-histidyl-[protein] = D-mannitol 1-phosphate(in) + L-histidyl-[protein]. Functionally, the phosphoenolpyruvate-dependent sugar phosphotransferase system (sugar PTS), a major carbohydrate active transport system, catalyzes the phosphorylation of incoming sugar substrates concomitantly with their translocation across the cell membrane. This system is involved in D-mannitol transport. This Buchnera aphidicola subsp. Baizongia pistaciae (strain Bp) protein is PTS system mannitol-specific EIICBA component (mtlA).